Here is a 100-residue protein sequence, read N- to C-terminus: Small ribosomal subunit protein uS14 (100 aa).

The protein belongs to the universal ribosomal protein uS14 family. In terms of assembly, part of the 30S ribosomal subunit. Contacts proteins S3 and S10.

Functionally, binds 16S rRNA, required for the assembly of 30S particles and may also be responsible for determining the conformation of the 16S rRNA at the A site. This chain is Small ribosomal subunit protein uS14, found in Parasynechococcus marenigrum (strain WH8102).